A 162-amino-acid polypeptide reads, in one-letter code: Nucleotide-binding protein CHU_2278 (162 aa).

Belongs to the YajQ family.

Nucleotide-binding protein. In Cytophaga hutchinsonii (strain ATCC 33406 / DSM 1761 / CIP 103989 / NBRC 15051 / NCIMB 9469 / D465), this protein is Nucleotide-binding protein CHU_2278.